The sequence spans 209 residues: Imidazoleglycerol-phosphate dehydratase (209 aa).

This sequence belongs to the imidazoleglycerol-phosphate dehydratase family.

The protein resides in the cytoplasm. The enzyme catalyses D-erythro-1-(imidazol-4-yl)glycerol 3-phosphate = 3-(imidazol-4-yl)-2-oxopropyl phosphate + H2O. It functions in the pathway amino-acid biosynthesis; L-histidine biosynthesis; L-histidine from 5-phospho-alpha-D-ribose 1-diphosphate: step 6/9. The polypeptide is Imidazoleglycerol-phosphate dehydratase (Nostoc sp. (strain PCC 7120 / SAG 25.82 / UTEX 2576)).